The sequence spans 153 residues: Small heat shock protein ibp (153 aa).

One can recognise a sHSP domain in the interval 35–153 (KIISDSVPPY…KIQKIQINVK (119 aa)).

Belongs to the small heat shock protein (HSP20) family.

The protein is Small heat shock protein ibp (ibp) of Buchnera aphidicola subsp. Thelaxes suberi.